The chain runs to 331 residues: MVIIHSPSYDLHNHEGHVENSGRTRAILRAIESSDLSPRFVEPGMAGIDDILMVHSSTHVEYLEVFAGRGGGWLDYDTYMTPESFSVARLSAGGAMLAAEEALRDGWSYSLGRPPGHHATYDRSMGFCIFNNIAIAIEHARRNLGVSRPLVLDFDVHHGNGTSSIFYRDRDVMYISIHQDPRTLFPGTGFIDETGSGEGEGFNLNIPMPRGSGNREYLWILGMILPAVLEGFRPDMIFVSAGFDAHRRDPLAEIMVDEEFFSWIGWFIHQTGLPCTAVLEGGYDPEALGRSNIAFMRGLDGEEYEPETAAPGGVSEIFSQLSDRFSAYFNF.

Residue H118 is the Proton donor/acceptor of the active site. The Zn(2+) site is built by D155, H157, and D244.

The protein belongs to the histone deacetylase family. It depends on Zn(2+) as a cofactor.

Probable deacetylase. The polypeptide is Probable deacetylase MTH_1194 (Methanothermobacter thermautotrophicus (strain ATCC 29096 / DSM 1053 / JCM 10044 / NBRC 100330 / Delta H) (Methanobacterium thermoautotrophicum)).